A 498-amino-acid chain; its full sequence is Sugar transport protein 2 (498 aa).

The Cytoplasmic segment spans residues 1-22; that stretch reads MAVGSMNVEEGTKAFPAKLTGQ. The next 12 membrane-spanning stretches (helical) occupy residues 23–43, 80–100, 117–137, 140–160, 167–187, 200–220, 288–308, 320–340, 348–368, 381–401, 421–441, and 450–470; these read VFLCCVIAAVGGLMFGYDIGI, LLQLFTSSLYLAGIFASFISS, IFFLVGAILNLSAQELGMLIG, ILLGFGIGFGNQTVPLFISEI, GGLNVMFQFLITIGILAASYV, YSLGGAAVPALILLIGSFFIH, LQFFQQFTGINVVMFYAPVLF, ISTVVTNGVNAIATVISLLVV, LLMEGALQMTATQMTIGGILL, AVPLIVLILICVYVSGFAWSW, GYFCAVAMNMVCTFIIGQFFL, and LLFFFFGIMNIIMGLFVVFFL. Topologically, residues 471–498 are cytoplasmic; that stretch reads PETKGVPIEEMAEKRWKTHPRWKKYFKD.

This sequence belongs to the major facilitator superfamily. Sugar transporter (TC 2.A.1.1) family. As to expression, pollen specific (at protein level).

It localises to the membrane. In terms of biological role, mediates an active uptake of hexoses, probably by sugar/hydrogen symport. Can transport glucose, 3-O-methylglucose, xylose, mannose, fructose and galactose. The sequence is that of Sugar transport protein 2 (STP2) from Arabidopsis thaliana (Mouse-ear cress).